Reading from the N-terminus, the 238-residue chain is Sugar fermentation stimulation protein homolog (238 aa).

Belongs to the SfsA family.

The chain is Sugar fermentation stimulation protein homolog from Klebsiella pneumoniae subsp. pneumoniae (strain ATCC 700721 / MGH 78578).